A 79-amino-acid chain; its full sequence is uncharacterized protein (79 aa).

This sequence belongs to the BolA/IbaG family.

This is an uncharacterized protein from Buchnera aphidicola subsp. Baizongia pistaciae (strain Bp).